The chain runs to 240 residues: EF-hand domain-containing protein D2 (240 aa).

Ala-2 bears the N-acetylalanine mark. Ser-11 bears the Phosphoserine mark. Residues 13–38 (RLQMEGEGGGETPEQPGLNGAAAAAA) are disordered. A phosphoserine mark is found at Ser-74 and Ser-76. Tyr-83 is modified (phosphotyrosine). 2 consecutive EF-hand domains span residues 92 to 127 (KQIKDMEKMFKQYDAGRDGFIDLMELKLMMEKLGAP) and 128 to 163 (QTHLGLKNMIKEVDEDFDSKLSFREFLLIFRKAAAG). 8 residues coordinate Ca(2+): Asp-105, Asp-109, Glu-116, Asp-141, Asp-143, Asp-145, Lys-147, and Glu-152. Lys-233 bears the N6-acetyllysine mark.

As to quaternary structure, interacts with CASP9; with inactive form. In terms of tissue distribution, found in lymphocytes; preferentially expressed in CD8+ cells.

It is found in the membrane raft. May regulate B-cell receptor (BCR)-induced immature and primary B-cell apoptosis. Plays a role as negative regulator of the canonical NF-kappa-B-activating branch. Controls spontaneous apoptosis through the regulation of BCL2L1 abundance. The sequence is that of EF-hand domain-containing protein D2 (EFHD2) from Homo sapiens (Human).